A 602-amino-acid polypeptide reads, in one-letter code: Bifunctional lycopene cyclase/phytoene synthase (602 aa).

Residues Met-1–Gln-241 are lycopene beta-cyclase. The next 7 helical transmembrane spans lie at Phe-6–Ile-26, Ile-30–Asp-50, Phe-76–Phe-96, Val-118–Ala-138, Tyr-146–Gly-166, Phe-168–Leu-188, and Met-230–Pro-250. The phytoene synthase stretch occupies residues Ala-248 to Gln-602.

In the N-terminal section; belongs to the lycopene beta-cyclase family. This sequence in the C-terminal section; belongs to the phytoene/squalene synthase family.

It is found in the membrane. The enzyme catalyses all-trans-lycopene = gamma-carotene. The catalysed reaction is gamma-carotene = all-trans-beta-carotene. It catalyses the reaction 2 (2E,6E,10E)-geranylgeranyl diphosphate = 15-cis-phytoene + 2 diphosphate. The protein operates within carotenoid biosynthesis; beta-carotene biosynthesis. It participates in carotenoid biosynthesis; phytoene biosynthesis; all-trans-phytoene from geranylgeranyl diphosphate: step 1/1. Bifunctional enzyme that catalyzes the reactions from geranylgeranyl diphosphate to phytoene (phytoene synthase) and from lycopene to beta-carotene via the intermediate gamma-carotene and from 3,4-didehydrolycopene to torulene (lycopene cyclase). Torulene is further processed to the acidic carotenoid neurosporaxanthin. The cyclase preferentially catalyzes single cyclizations at only one end of the substrate to produce monocyclic carotenoids. Neurosporaxanthin is synthesized from geranyl-geranyl pyrophosphate (GGPP) through several enzymatic activities. Phytoene synthase activity performed by the bifunctional enzyme al-2 first produces phytoene from geranyl-geranyl pyrophosphate (GGPP). The phytoene dehydrogenase al-1 then introduces 5 desaturations to lead to 3,4-didehydrolycopene via the intermediates phytofluene, zeta-carotene, neurosporene and lycopene. Al-2 cyclase activity then converts 3,4-didehydrolycopene into torulene. Al-2 can also convet lycopene into gamma-carotene which in turn is converted to beta-carotene by an additional al-2 cyclization reaction. Torulene is the substrate of the dioxidase cao-2 that breaks the molecule, removing five carbon atoms to yield beta-apo-4'-carotenal, whereas the aldehyde dehydrogenase ylo-1 mediates the last step by converting beta-apo-4'-carotenal into neurosporaxanthin. This is Bifunctional lycopene cyclase/phytoene synthase from Neurospora crassa (strain ATCC 24698 / 74-OR23-1A / CBS 708.71 / DSM 1257 / FGSC 987).